We begin with the raw amino-acid sequence, 343 residues long: Geranylgeranyl pyrophosphate synthase (343 aa).

Basic and acidic residues predominate over residues 1-12; the sequence is MAYTVEPREHSK. The segment at 1-26 is disordered; that stretch reads MAYTVEPREHSKNTTLPTVAMPPSPP. Isopentenyl diphosphate-binding residues include lysine 69, arginine 72, and histidine 101. Mg(2+) is bound by residues aspartate 108 and aspartate 112. Position 117 (arginine 117) interacts with dimethylallyl diphosphate. Isopentenyl diphosphate is bound at residue arginine 118. Residues threonine 196 and glutamine 229 each coordinate dimethylallyl diphosphate. Aspartate 232 is a Mg(2+) binding site. Dimethylallyl diphosphate contacts are provided by asparagine 236, lysine 246, and lysine 256.

Belongs to the FPP/GGPP synthase family. Mg(2+) serves as cofactor.

It catalyses the reaction isopentenyl diphosphate + dimethylallyl diphosphate = (2E)-geranyl diphosphate + diphosphate. The catalysed reaction is isopentenyl diphosphate + (2E)-geranyl diphosphate = (2E,6E)-farnesyl diphosphate + diphosphate. It carries out the reaction isopentenyl diphosphate + (2E,6E)-farnesyl diphosphate = (2E,6E,10E)-geranylgeranyl diphosphate + diphosphate. Its pathway is mycotoxin biosynthesis. In terms of biological role, geranylgeranyl pyrophosphate synthase; part of the gene cluster that mediates the biosynthesis of aphidicolin, a specific inhibitor of eukaryotic DNA synthesis and DNA polymerase alpha. The geranylgeranyl pyrophosphate synthase GGS is required for supplying a sufficient amount of geranylgeranyl diphosphate (GGDP), the general precursor of diterpenes. The diterpene synthase ACS then catalyzes the conversion of geranylgeranyl diphosphate to aphidicolan-16-beta-ol via the intermediate syn-copalyldiphosphate (syn-CDP). In addition to aphidicolan-16-beta-ol, the enzyme also produces low levels of amphidicol-15-ene and amphidicol-16-ene. The cytochrome P450 monooxygenase P450-2 then catalyzes the two-step hydroxylation from aphidicolan-16-beta-ol to 3-deoxyaphidicolin via a 17,3-deoxyaphidicolin intermediate. Finally, the cytochrome P450 monooxygenase P450-1 converts 3-deoxyaphidicolin to aphidicolin. This chain is Geranylgeranyl pyrophosphate synthase (GGS), found in Neocamarosporium betae (Beet black rot fungus).